The chain runs to 184 residues: Heme transporter hrg-4 (184 aa).

A helical transmembrane segment spans residues Ile19 to Lys39. Asn42 carries an N-linked (GlcNAc...) asparagine glycan. The next 3 helical transmembrane spans lie at Thr46–Leu66, Val87–Thr107, and Ile124–Val146.

The protein belongs to the HRG family.

It is found in the cell membrane. Functionally, heme transporter that mediates heme uptake across the plasma membrane. The sequence is that of Heme transporter hrg-4 from Caenorhabditis elegans.